Here is a 710-residue protein sequence, read N- to C-terminus: Aminopeptidase P2 (710 aa).

A chloroplast-targeting transit peptide spans 1–79 (MIPLTLSSPS…IRKAQTKVVV (79 aa)). A peptide contacts are provided by R147 and H486. Mn(2+)-binding residues include D506, D517, and H580. The a peptide site is built by H580, H589, and E614. Positions 614 and 628 each coordinate Mn(2+).

It belongs to the peptidase M24B family. As to quaternary structure, homodimer. Mn(2+) serves as cofactor.

Its subcellular location is the plastid. It is found in the chloroplast. The enzyme catalyses Release of any N-terminal amino acid, including proline, that is linked to proline, even from a dipeptide or tripeptide.. Functionally, catalyzes the removal of a penultimate prolyl residue from the N-termini of peptides, such as Arg-Pro-Pro. In Arabidopsis thaliana (Mouse-ear cress), this protein is Aminopeptidase P2.